The following is a 252-amino-acid chain: Geranylgeranylglyceryl phosphate synthase (252 aa).

Mg(2+) contacts are provided by Asp-26 and Ser-55. Sn-glycerol 1-phosphate contacts are provided by residues 174–180, 205–206, and 227–228; these read YLEAGSG, GG, and GT.

The protein belongs to the GGGP/HepGP synthase family. Group II subfamily. Homotetramer. Homohexamer. Requires Mg(2+) as cofactor.

Its subcellular location is the cytoplasm. It catalyses the reaction sn-glycerol 1-phosphate + (2E,6E,10E)-geranylgeranyl diphosphate = sn-3-O-(geranylgeranyl)glycerol 1-phosphate + diphosphate. It participates in membrane lipid metabolism; glycerophospholipid metabolism. Prenyltransferase that catalyzes the transfer of the geranylgeranyl moiety of geranylgeranyl diphosphate (GGPP) to the C3 hydroxyl of sn-glycerol-1-phosphate (G1P). This reaction is the first ether-bond-formation step in the biosynthesis of archaeal membrane lipids. The protein is Geranylgeranylglyceryl phosphate synthase of Thermococcus kodakarensis (strain ATCC BAA-918 / JCM 12380 / KOD1) (Pyrococcus kodakaraensis (strain KOD1)).